The primary structure comprises 90 residues: Large ribosomal subunit protein bL27 (90 aa).

Positions 1–21 (MAHTKAGGTTRNSRDSAGRRL) are disordered.

The protein belongs to the bacterial ribosomal protein bL27 family.

In Metamycoplasma arthritidis (strain 158L3-1) (Mycoplasma arthritidis), this protein is Large ribosomal subunit protein bL27.